Consider the following 342-residue polypeptide: S-adenosylmethionine:tRNA ribosyltransferase-isomerase (342 aa).

This sequence belongs to the QueA family. Monomer.

The protein localises to the cytoplasm. It carries out the reaction 7-aminomethyl-7-carbaguanosine(34) in tRNA + S-adenosyl-L-methionine = epoxyqueuosine(34) in tRNA + adenine + L-methionine + 2 H(+). It participates in tRNA modification; tRNA-queuosine biosynthesis. Its function is as follows. Transfers and isomerizes the ribose moiety from AdoMet to the 7-aminomethyl group of 7-deazaguanine (preQ1-tRNA) to give epoxyqueuosine (oQ-tRNA). The protein is S-adenosylmethionine:tRNA ribosyltransferase-isomerase of Listeria monocytogenes serotype 4b (strain F2365).